Consider the following 188-residue polypeptide: dCTP deaminase (188 aa).

DCTP contacts are provided by residues Lys111–Arg116, Thr135–Glu137, Gln156, Tyr170, and Gln180. Glu137 acts as the Proton donor/acceptor in catalysis.

It belongs to the dCTP deaminase family. In terms of assembly, homotrimer.

It catalyses the reaction dCTP + H2O + H(+) = dUTP + NH4(+). Its pathway is pyrimidine metabolism; dUMP biosynthesis; dUMP from dCTP (dUTP route): step 1/2. Functionally, catalyzes the deamination of dCTP to dUTP. The chain is dCTP deaminase from Azoarcus sp. (strain BH72).